A 262-amino-acid polypeptide reads, in one-letter code: Cytochrome c oxidase subunit 2 (262 aa).

2 helical membrane-spanning segments follow: residues 31-51 (HIMF…YVII) and 72-92 (IIWT…SFIL). His175, Cys210, Glu212, Cys214, His218, and Met221 together coordinate Cu cation. Glu212 serves as a coordination point for Mg(2+).

It belongs to the cytochrome c oxidase subunit 2 family. In terms of assembly, component of the cytochrome c oxidase (complex IV, CIV), a multisubunit enzyme composed of a catalytic core of 3 subunits and several supernumerary subunits. The complex exists as a monomer or a dimer and forms supercomplexes (SCs) in the inner mitochondrial membrane with ubiquinol-cytochrome c oxidoreductase (cytochrome b-c1 complex, complex III, CIII). Requires Cu cation as cofactor.

It localises to the mitochondrion inner membrane. It carries out the reaction 4 Fe(II)-[cytochrome c] + O2 + 8 H(+)(in) = 4 Fe(III)-[cytochrome c] + 2 H2O + 4 H(+)(out). In terms of biological role, component of the cytochrome c oxidase, the last enzyme in the mitochondrial electron transport chain which drives oxidative phosphorylation. The respiratory chain contains 3 multisubunit complexes succinate dehydrogenase (complex II, CII), ubiquinol-cytochrome c oxidoreductase (cytochrome b-c1 complex, complex III, CIII) and cytochrome c oxidase (complex IV, CIV), that cooperate to transfer electrons derived from NADH and succinate to molecular oxygen, creating an electrochemical gradient over the inner membrane that drives transmembrane transport and the ATP synthase. Cytochrome c oxidase is the component of the respiratory chain that catalyzes the reduction of oxygen to water. Electrons originating from reduced cytochrome c in the intermembrane space (IMS) are transferred via the dinuclear copper A center (CU(A)) of subunit 2 and heme A of subunit 1 to the active site in subunit 1, a binuclear center (BNC) formed by heme A3 and copper B (CU(B)). The BNC reduces molecular oxygen to 2 water molecules using 4 electrons from cytochrome c in the IMS and 4 protons from the mitochondrial matrix. This is Cytochrome c oxidase subunit 2 (COX2) from Candida albicans (strain SC5314 / ATCC MYA-2876) (Yeast).